The chain runs to 222 residues: Large ribosomal subunit protein bL20 (222 aa).

It belongs to the bacterial ribosomal protein bL20 family.

Its function is as follows. Binds directly to 23S ribosomal RNA and is necessary for the in vitro assembly process of the 50S ribosomal subunit. It is not involved in the protein synthesizing functions of that subunit. This chain is Large ribosomal subunit protein bL20 (rplT), found in Paenarthrobacter aurescens (strain TC1).